Here is a 196-residue protein sequence, read N- to C-terminus: Nucleoid occlusion factor SlmA (196 aa).

The HTH tetR-type domain maps to 7 to 68; sequence INRREEILQA…GLIEFIEESL (62 aa). The H-T-H motif DNA-binding region spans 31–50; it reads TTAKLAKQVGVSEAALYRHF. Positions 110 to 139 form a coiled coil; sequence HALMFENERLRDRINQLFERIETSLRQILR.

The protein belongs to the nucleoid occlusion factor SlmA family. Homodimer. Interacts with FtsZ.

It localises to the cytoplasm. Its subcellular location is the nucleoid. In terms of biological role, required for nucleoid occlusion (NO) phenomenon, which prevents Z-ring formation and cell division over the nucleoid. Acts as a DNA-associated cell division inhibitor that binds simultaneously chromosomal DNA and FtsZ, and disrupts the assembly of FtsZ polymers. SlmA-DNA-binding sequences (SBS) are dispersed on non-Ter regions of the chromosome, preventing FtsZ polymerization at these regions. The sequence is that of Nucleoid occlusion factor SlmA from Vibrio cholerae serotype O1 (strain ATCC 39315 / El Tor Inaba N16961).